A 206-amino-acid polypeptide reads, in one-letter code: Transmembrane emp24 domain-containing protein bai (206 aa).

The first 20 residues, 1 to 20, serve as a signal peptide directing secretion; it reads MLKVLYVIFTIFGYIWPIYS. At 21 to 172 the chain is on the lumenal side; that stretch reads VMFHLTPNTQ…RDTNEKTNSR (152 aa). A GOLD domain is found at 30 to 140; the sequence is QKCLKEDIQA…LKPLEVDLKR (111 aa). Residues 173 to 193 form a helical membrane-spanning segment; that stretch reads VLFFSIFSMCCLLGLATWQVL. Residues 194–206 are Cytoplasmic-facing; that stretch reads YLRRYFKAKKLIE.

Belongs to the EMP24/GP25L family.

It is found in the membrane. Its function is as follows. Eca and bai are essential, though not redundant, for dorsoventral patterning of the embryo. Specifically required during early embryogenesis for the activity of maternal tkv, while the zygotic tkv is not affected. This Drosophila virilis (Fruit fly) protein is Transmembrane emp24 domain-containing protein bai.